The following is a 934-amino-acid chain: Pesticidal crystal protein Cry1Aa (934 aa).

The protein belongs to the delta endotoxin family.

Promotes colloidosmotic lysis by binding to the midgut epithelial cells of many lepidopteran larvae. The protein is Pesticidal crystal protein Cry1Aa (cry1Aa) of Bacillus thuringiensis subsp. sotto.